The chain runs to 314 residues: Melanoma-associated antigen 3 (314 aa).

Positions 1 to 20 (MPLEQRSQHCKPEEGLEARG) are enriched in basic and acidic residues. Residues 1–99 (MPLEQRSQHC…QEEEGPSTFP (99 aa)) are disordered. Low complexity predominate over residues 21 to 44 (EALGLVGAQAPATEEQEAASSSST). The segment covering 65–87 (PQGASSLPTTMNYPLWSQSYEDS) has biased composition (polar residues). An MAGE domain is found at 109–308 (LSRKVAELVH…ISYPPLHEWV (200 aa)).

As to quaternary structure, interacts with TRIM28. In terms of processing, ubiquitinated by the DCX(DCAF12) complex specifically recognizes the diglutamate (Glu-Glu) at the C-terminus, leading to its degradation. As to expression, expressed in many tumors of several types, such as melanoma, head and neck squamous cell carcinoma, lung carcinoma and breast carcinoma, but not in normal tissues except for testes and placenta. Never expressed in kidney tumors, Leukemias and lymphomas.

Its function is as follows. Activator of ubiquitin ligase activity of RING-type zinc finger-containing E3 ubiquitin-protein ligases that acts as a repressor of autophagy. May enhance ubiquitin ligase activity of TRIM28 and stimulate p53/TP53 ubiquitination by TRIM28. Proposed to act through recruitment and/or stabilization of the Ubl-conjugating enzyme (E2) at the E3:substrate complex. May play a role in embryonal development and tumor transformation or aspects of tumor progression. In vitro promotes cell viability in melanoma cell lines. Antigen recognized on a melanoma by autologous cytolytic T-lymphocytes. This chain is Melanoma-associated antigen 3, found in Homo sapiens (Human).